The primary structure comprises 133 residues: Large ribosomal subunit protein uL22 (133 aa).

The protein belongs to the universal ribosomal protein uL22 family. Part of the 50S ribosomal subunit.

This protein binds specifically to 23S rRNA; its binding is stimulated by other ribosomal proteins, e.g. L4, L17, and L20. It is important during the early stages of 50S assembly. It makes multiple contacts with different domains of the 23S rRNA in the assembled 50S subunit and ribosome. In terms of biological role, the globular domain of the protein is located near the polypeptide exit tunnel on the outside of the subunit, while an extended beta-hairpin is found that lines the wall of the exit tunnel in the center of the 70S ribosome. The sequence is that of Large ribosomal subunit protein uL22 from Nocardia farcinica (strain IFM 10152).